We begin with the raw amino-acid sequence, 469 residues long: 3-isopropylmalate dehydratase large subunit (469 aa).

[4Fe-4S] cluster contacts are provided by Cys347, Cys407, and Cys410.

This sequence belongs to the aconitase/IPM isomerase family. LeuC type 1 subfamily. In terms of assembly, heterodimer of LeuC and LeuD. It depends on [4Fe-4S] cluster as a cofactor.

The enzyme catalyses (2R,3S)-3-isopropylmalate = (2S)-2-isopropylmalate. Its pathway is amino-acid biosynthesis; L-leucine biosynthesis; L-leucine from 3-methyl-2-oxobutanoate: step 2/4. Functionally, catalyzes the isomerization between 2-isopropylmalate and 3-isopropylmalate, via the formation of 2-isopropylmaleate. The protein is 3-isopropylmalate dehydratase large subunit of Proteus mirabilis (strain HI4320).